A 427-amino-acid chain; its full sequence is Phosphatidylinositol 4-phosphate 5-kinase 10 (427 aa).

The PIPK domain maps to 1–419 (MFTREITAKD…RFQDFVSQIF (419 aa)). Disordered stretches follow at residues 247 to 287 (SRGS…DSEN) and 334 to 355 (MKIP…VGKQ). The tract at residues 379–400 (YGVRKRLEHCYKSIQHSSKTIS) is activation loop.

It catalyses the reaction a 1,2-diacyl-sn-glycero-3-phospho-(1D-myo-inositol 4-phosphate) + ATP = a 1,2-diacyl-sn-glycero-3-phospho-(1D-myo-inositol-4,5-bisphosphate) + ADP + H(+). The polypeptide is Phosphatidylinositol 4-phosphate 5-kinase 10 (PIP5K10) (Arabidopsis thaliana (Mouse-ear cress)).